Consider the following 289-residue polypeptide: Protein shisa-2 homolog (289 aa).

Residues M1–A27 form the signal peptide. The Extracellular segment spans residues S28–S104. The segment at G81–D102 is disordered. A helical membrane pass occupies residues A105–L125. Residues G126–V289 lie on the Cytoplasmic side of the membrane. Positions P162–T198 are disordered. The segment covering S163–A191 has biased composition (low complexity).

The protein belongs to the shisa family.

Its subcellular location is the endoplasmic reticulum membrane. Functionally, plays an essential role in the maturation of presomitic mesoderm cells by individual attenuation of both FGF and WNT signaling. This Bos taurus (Bovine) protein is Protein shisa-2 homolog (SHISA2).